The following is a 282-amino-acid chain: sn-glycerol-3-phosphate transport system permease protein UgpE (282 aa).

A run of 6 helical transmembrane segments spans residues 14–34 (LILI…FVAS), 86–106 (MAIA…IVFF), 112–132 (MFFF…RILP), 146–168 (YAGL…QFFL), 201–221 (IAAL…WPLL), and 248–268 (WNYV…VVVL). An ABC transmembrane type-1 domain is found at 78–269 (LWNSFVVAMA…IPPILVVVLM (192 aa)).

The protein belongs to the binding-protein-dependent transport system permease family. The complex is composed of two ATP-binding proteins (UgpC), two transmembrane proteins (UgpA and UgpE) and a solute-binding protein (UgpB).

It is found in the cell inner membrane. Functionally, part of the ABC transporter complex UgpBAEC involved in sn-glycerol-3-phosphate (G3P) import. Probably responsible for the translocation of the substrate across the membrane. This chain is sn-glycerol-3-phosphate transport system permease protein UgpE (ugpE), found in Brucella suis biovar 1 (strain 1330).